We begin with the raw amino-acid sequence, 681 residues long: Potassium-transporting ATPase ATP-binding subunit (681 aa).

4 helical membrane-spanning segments follow: residues 37 to 57 (MFVV…PTYF), 64 to 84 (VGYN…ANFA), 218 to 238 (IALT…VMTL), and 255 to 275 (IALL…AIGI). The active-site 4-aspartylphosphate intermediate is the Asp-306. ATP-binding positions include Asp-343, Glu-347, 375–382 (FSAETRMS), and Lys-394. Mg(2+)-binding residues include Asp-517 and Asp-521. Transmembrane regions (helical) follow at residues 573-595 (ALTT…AIIS), 615-635 (AILS…PIAM), and 655-675 (IYGL…DMII).

It belongs to the cation transport ATPase (P-type) (TC 3.A.3) family. Type IA subfamily. As to quaternary structure, the system is composed of three essential subunits: KdpA, KdpB and KdpC.

The protein localises to the cell membrane. It carries out the reaction K(+)(out) + ATP + H2O = K(+)(in) + ADP + phosphate + H(+). Its function is as follows. Part of the high-affinity ATP-driven potassium transport (or Kdp) system, which catalyzes the hydrolysis of ATP coupled with the electrogenic transport of potassium into the cytoplasm. This subunit is responsible for energy coupling to the transport system and for the release of the potassium ions to the cytoplasm. The sequence is that of Potassium-transporting ATPase ATP-binding subunit from Caldanaerobacter subterraneus subsp. tengcongensis (strain DSM 15242 / JCM 11007 / NBRC 100824 / MB4) (Thermoanaerobacter tengcongensis).